We begin with the raw amino-acid sequence, 642 residues long: MSTKIEQLEFQAETRQLLDLMIHSVYSNKDSFLRELISNASDALDKLRLEAFRNKELHVDTSDLHVEIEVDAEKRTLTVRDNGIGMSHDEVVDLIGTLAKSGTADLRRKLKEAKDAAASEELIGQFGIGFYSTFMVADKVTLLTRKAGESEATRWESSGEATYTIEAVDDAPQGSSVTLHLKPEDAEDHLHDYTSERKIKELVKRYSDFIAWPIRMNVERTVPAEGDGEDEVTTTSETINSMKALWARSKDDVSEDEYKEFYKHIAHAWDDPLEVIPMKAEGTFEFQALLFIPSHAPFDLFMRDGKTGVQLYVKRVFIMDDCDQLMPEYLRFVKGVVDAQDLSLNVSREILQQDRQIRAIRRRLTKKVLTTIKDLKTERPDDYRTFWAEFGRAVKEGLMSDTDNRDVLLGISSFASTHSEEELTSLEDYVARMKDGQEQIFYATGESRQLLESSPHMEAFRAKGFEVLLLTDPVDEMWVGAVPEFDGKSFQSIAKGEVDLDTEEDKKAHESEREEQEKDFAGLLSWMADALSEQVKEVRLSTRLTTSPACIVGDAFSMSPALERMYRASGQPVPVTKRILELNPTHPLVTGLREAHGERNEDPALGETAELLYGMALLAEGGELEDPARFTTMLANRLARTV.

An a; substrate-binding region spans residues 1–348 (MSTKIEQLEF…AQDLSLNVSR (348 aa)). The tract at residues 349–564 (EILQQDRQIR…AFSMSPALER (216 aa)) is b. The segment at 565-642 (MYRASGQPVP…MLANRLARTV (78 aa)) is c.

Belongs to the heat shock protein 90 family. As to quaternary structure, homodimer.

The protein resides in the cytoplasm. Molecular chaperone. Has ATPase activity. This chain is Chaperone protein HtpG, found in Rhodococcus jostii (strain RHA1).